The primary structure comprises 222 residues: Cyclin-dependent kinase inhibitor 3 (222 aa).

Residues 68 to 101 form a disordered region; that stretch reads KPSSLIEPKQPPRVHRSGIKESGSRSRVDSVNSV. Residues 85–95 are compositionally biased toward basic and acidic residues; sequence GIKESGSRSRV.

It belongs to the CDI family. ICK/KRP subfamily. As to quaternary structure, specifically interacts with CDKA-1, but not with CDKB1-1.

The protein resides in the nucleus. It localises to the nucleoplasm. Binds and inhibits CYCD2-1/CDKA-1 complex kinase activity. May target specifically CDKA-1. This chain is Cyclin-dependent kinase inhibitor 3 (KRP3), found in Arabidopsis thaliana (Mouse-ear cress).